A 63-amino-acid chain; its full sequence is Large ribosomal subunit protein bL28 (63 aa).

Belongs to the bacterial ribosomal protein bL28 family.

The sequence is that of Large ribosomal subunit protein bL28 from Symbiobacterium thermophilum (strain DSM 24528 / JCM 14929 / IAM 14863 / T).